We begin with the raw amino-acid sequence, 201 residues long: Peptide deformylase (201 aa).

2 residues coordinate Fe cation: Cys-121 and His-163. Residue Glu-164 is part of the active site. His-167 provides a ligand contact to Fe cation.

Belongs to the polypeptide deformylase family. The cofactor is Fe(2+).

It carries out the reaction N-terminal N-formyl-L-methionyl-[peptide] + H2O = N-terminal L-methionyl-[peptide] + formate. Functionally, removes the formyl group from the N-terminal Met of newly synthesized proteins. Requires at least a dipeptide for an efficient rate of reaction. N-terminal L-methionine is a prerequisite for activity but the enzyme has broad specificity at other positions. In Synechococcus sp. (strain CC9902), this protein is Peptide deformylase.